The sequence spans 399 residues: Coenzyme A biosynthesis bifunctional protein CoaBC (399 aa).

The tract at residues 1–190 (MQTLAGKKIL…FQPKVLEGKS (190 aa)) is phosphopantothenoylcysteine decarboxylase. Cysteine 159 serves as the catalytic Proton donor. Positions 191-399 (ILISAGPTRE…KILEKMRELM (209 aa)) are phosphopantothenate--cysteine ligase. Residues aspartate 279, lysine 289, 307 to 310 (PDIV), phenylalanine 326, lysine 340, and lysine 344 each bind CTP.

The protein in the N-terminal section; belongs to the HFCD (homo-oligomeric flavin containing Cys decarboxylase) superfamily. This sequence in the C-terminal section; belongs to the PPC synthetase family. Mg(2+) serves as cofactor. The cofactor is FMN.

The enzyme catalyses N-[(R)-4-phosphopantothenoyl]-L-cysteine + H(+) = (R)-4'-phosphopantetheine + CO2. It catalyses the reaction (R)-4'-phosphopantothenate + L-cysteine + CTP = N-[(R)-4-phosphopantothenoyl]-L-cysteine + CMP + diphosphate + H(+). Its pathway is cofactor biosynthesis; coenzyme A biosynthesis; CoA from (R)-pantothenate: step 2/5. The protein operates within cofactor biosynthesis; coenzyme A biosynthesis; CoA from (R)-pantothenate: step 3/5. Catalyzes two sequential steps in the biosynthesis of coenzyme A. In the first step cysteine is conjugated to 4'-phosphopantothenate to form 4-phosphopantothenoylcysteine. In the second step the latter compound is decarboxylated to form 4'-phosphopantotheine. This chain is Coenzyme A biosynthesis bifunctional protein CoaBC, found in Vibrio parahaemolyticus serotype O3:K6 (strain RIMD 2210633).